The following is a 233-amino-acid chain: Probable fimbrial chaperone protein ElfD (233 aa).

Positions 1-26 (MKTCITKGIVTVSLTAILLSCSSTWA) are cleaved as a signal peptide.

This sequence belongs to the periplasmic pilus chaperone family.

The protein resides in the periplasm. Functionally, part of the elfADCG fimbrial operon, which could be required for adherence to host epithelial cells. Could be required for the biogenesis of the ElfA fimbriae. The chain is Probable fimbrial chaperone protein ElfD (elfD) from Escherichia coli O157:H7.